An 870-amino-acid chain; its full sequence is Leucine--tRNA ligase (870 aa).

The short motif at 42–52 (PYPSGKLHMGH) is the 'HIGH' region element. The short motif at 629–633 (KMSKS) is the 'KMSKS' region element. ATP is bound at residue Lys-632.

This sequence belongs to the class-I aminoacyl-tRNA synthetase family.

It is found in the cytoplasm. The catalysed reaction is tRNA(Leu) + L-leucine + ATP = L-leucyl-tRNA(Leu) + AMP + diphosphate. This is Leucine--tRNA ligase from Ectopseudomonas mendocina (strain ymp) (Pseudomonas mendocina).